A 326-amino-acid polypeptide reads, in one-letter code: UDP-N-acetylglucosamine transporter (326 aa).

8 helical membrane-spanning segments follow: residues 4–24 (NLKYLSLGILVFQTTSLVLTM), 38–58 (LSSTAVVVAELLKIMACILLV), 136–156 (LGVYQWLSLVILMTGVAFVQW), 174–194 (FVGLMAVLTACFSSGFAGVYF), 212–232 (LGFFGSIFGLMGVYVYDGELV), 244–264 (LTWIVVVLQALGGLVIAAVIK), 269–289 (ILKGFATSLSIILSTLISYFW), and 293–313 (FVPTSVFFLGAILVITATFLY).

The protein belongs to the nucleotide-sugar transporter family. SLC35A subfamily. In terms of assembly, interacts with SLC35A2; the interaction is reduced in the presence of SLC35A4. Found in a complex with SLC35A2 and SLC35A4. Interacts with MGAT4B. Post-translationally, O-Glcnacylation regulates the stability of SLC35A3 and the specific complex formation with MGAT4B.

Its subcellular location is the golgi apparatus membrane. It catalyses the reaction UMP(out) + UDP-N-acetyl-alpha-D-glucosamine(in) = UMP(in) + UDP-N-acetyl-alpha-D-glucosamine(out). Its function is as follows. Transports diphosphate-N-acetylglucosamine (UDP-GlcNAc) from the cytosol into the lumen of the Golgi apparatus, functioning as an antiporter that exchanges UDP-N-acetyl-alpha-D-glucosamine for UMP. May supply UDP-GlcNAc as substrate for Golgi-resident glycosyltransferases that generate highly branched, multiantennary complex N-glycans and keratan sulfate. However, the exact role of SLC35A3 still needs to be elucidated, it could be a member of a catalytically more efficient multiprotein complex rather than function independently as a single transporter. The protein is UDP-N-acetylglucosamine transporter (SLC35A3) of Bos taurus (Bovine).